The following is a 446-amino-acid chain: Branched-chain amino acid permease BrnQ (446 aa).

12 helical membrane passes run 13–33 (ISSM…PAYL), 41–61 (LWIS…LAIA), 81–101 (KYSY…FAIP), 120–140 (MAKS…MLFF), 154–174 (FLTP…LLHP), 196–216 (VLAG…IIVI), 237–257 (TGVL…LVGA), 285–305 (GAVI…IGLI), 325–345 (WAII…TTII), 347–367 (FSLP…LLAL), 381–401 (IMTA…LPAG), and 421–441 (GLGW…KGVI).

This sequence belongs to the branched chain amino acid transporter family.

Its subcellular location is the cell membrane. With respect to regulation, leucine uptake is inhibited by the proton ionophore carbonyl cyanide m-chlorophenylhydrazone (CCCP). Its function is as follows. Branched chain amino acid transport system which is involved in the uptake of leucine, valine and isoleucine. The proton motive force is probably the driving force for transport. The protein is Branched-chain amino acid permease BrnQ of Lactobacillus delbrueckii subsp. lactis.